Here is a 254-residue protein sequence, read N- to C-terminus: Dihydroorotate dehydrogenase B (NAD(+)), electron transfer subunit (254 aa).

Positions 1–99 constitute an FAD-binding FR-type domain; sequence MLQTEMKVIQ…LGPLGKGFDL (99 aa). Residues 50 to 53, 67 to 69, and 74 to 75 contribute to the FAD site; these read RPIS, LYR, and GT. [2Fe-2S] cluster is bound by residues cysteine 218, cysteine 223, cysteine 226, and cysteine 241.

This sequence belongs to the PyrK family. Heterotetramer of 2 PyrK and 2 PyrD type B subunits. [2Fe-2S] cluster serves as cofactor. FAD is required as a cofactor.

Its pathway is pyrimidine metabolism; UMP biosynthesis via de novo pathway; orotate from (S)-dihydroorotate (NAD(+) route): step 1/1. Functionally, responsible for channeling the electrons from the oxidation of dihydroorotate from the FMN redox center in the PyrD type B subunit to the ultimate electron acceptor NAD(+). This chain is Dihydroorotate dehydrogenase B (NAD(+)), electron transfer subunit, found in Listeria innocua serovar 6a (strain ATCC BAA-680 / CLIP 11262).